Reading from the N-terminus, the 56-residue chain is Small ribosomal subunit protein uS14 (56 aa).

It belongs to the universal ribosomal protein uS14 family. In terms of assembly, component of the small ribosomal subunit (SSU). Mature yeast ribosomes consist of a small (40S) and a large (60S) subunit. The 40S small subunit contains 1 molecule of ribosomal RNA (18S rRNA) and at least 33 different proteins. The large 60S subunit contains 3 rRNA molecules (25S, 5.8S and 5S rRNA) and at least 46 different proteins.

It localises to the cytoplasm. Its subcellular location is the nucleus. Its function is as follows. Component of the ribosome, a large ribonucleoprotein complex responsible for the synthesis of proteins in the cell. The small ribosomal subunit (SSU) binds messenger RNAs (mRNAs) and translates the encoded message by selecting cognate aminoacyl-transfer RNA (tRNA) molecules. The large subunit (LSU) contains the ribosomal catalytic site termed the peptidyl transferase center (PTC), which catalyzes the formation of peptide bonds, thereby polymerizing the amino acids delivered by tRNAs into a polypeptide chain. The nascent polypeptides leave the ribosome through a tunnel in the LSU and interact with protein factors that function in enzymatic processing, targeting, and the membrane insertion of nascent chains at the exit of the ribosomal tunnel. In Schizosaccharomyces pombe (strain 972 / ATCC 24843) (Fission yeast), this protein is Small ribosomal subunit protein uS14 (rps29).